The following is a 539-amino-acid chain: Aluminum-activated malate transporter 13 (539 aa).

Transmembrane regions (helical) follow at residues 57–77 (VGVALTLVSLLYLMEPFFEGV), 80–100 (NALWAVMTVVVVLEFSAGATL), 107–127 (GLGTLIAGSLAFFIEWVAIHS), 130–150 (ILGGIFIGTSVFTIGSMITYM), 165–185 (LVFLLTFNLITVSSYRVDTVI), and 192–212 (LYTIGMGIGICLFMSLLFFPI).

This sequence belongs to the aromatic acid exporter (TC 2.A.85) family.

It is found in the membrane. Malate transporter. This Arabidopsis thaliana (Mouse-ear cress) protein is Aluminum-activated malate transporter 13 (ALMT13).